Reading from the N-terminus, the 620-residue chain is 1-deoxy-D-xylulose-5-phosphate synthase (620 aa).

Thiamine diphosphate-binding positions include His-80 and 121–123; that span reads GHS. Asp-152 is a Mg(2+) binding site. Thiamine diphosphate contacts are provided by residues 153-154, Asn-181, Tyr-288, and Glu-370; that span reads GA. Asn-181 lines the Mg(2+) pocket.

It belongs to the transketolase family. DXPS subfamily. Homodimer. Requires Mg(2+) as cofactor. Thiamine diphosphate serves as cofactor.

It catalyses the reaction D-glyceraldehyde 3-phosphate + pyruvate + H(+) = 1-deoxy-D-xylulose 5-phosphate + CO2. It participates in metabolic intermediate biosynthesis; 1-deoxy-D-xylulose 5-phosphate biosynthesis; 1-deoxy-D-xylulose 5-phosphate from D-glyceraldehyde 3-phosphate and pyruvate: step 1/1. Its function is as follows. Catalyzes the acyloin condensation reaction between C atoms 2 and 3 of pyruvate and glyceraldehyde 3-phosphate to yield 1-deoxy-D-xylulose-5-phosphate (DXP). The polypeptide is 1-deoxy-D-xylulose-5-phosphate synthase (Escherichia coli O127:H6 (strain E2348/69 / EPEC)).